The following is a 237-amino-acid chain: Orotidine 5'-phosphate decarboxylase (237 aa).

Substrate contacts are provided by residues Asp-17, Lys-39, 66-75, Thr-121, Arg-182, Gln-191, Gly-211, and Arg-212; that span reads DLKLHDIGNT. Lys-68 acts as the Proton donor in catalysis.

It belongs to the OMP decarboxylase family. Type 1 subfamily. In terms of assembly, homodimer.

It carries out the reaction orotidine 5'-phosphate + H(+) = UMP + CO2. It participates in pyrimidine metabolism; UMP biosynthesis via de novo pathway; UMP from orotate: step 2/2. Functionally, catalyzes the decarboxylation of orotidine 5'-monophosphate (OMP) to uridine 5'-monophosphate (UMP). The polypeptide is Orotidine 5'-phosphate decarboxylase (Bradyrhizobium diazoefficiens (strain JCM 10833 / BCRC 13528 / IAM 13628 / NBRC 14792 / USDA 110)).